Consider the following 505-residue polypeptide: Maturase K (505 aa).

This sequence belongs to the intron maturase 2 family. MatK subfamily.

Its subcellular location is the plastid. The protein resides in the chloroplast. In terms of biological role, usually encoded in the trnK tRNA gene intron. Probably assists in splicing its own and other chloroplast group II introns. The sequence is that of Maturase K from Chiococca alba (West Indian milkberry).